Here is a 310-residue protein sequence, read N- to C-terminus: 2-phospho-L-lactate transferase (310 aa).

7,8-didemethyl-8-hydroxy-5-deazariboflavin contacts are provided by Asp50 and Arg89.

Belongs to the CofD family. In terms of assembly, homodimer. Mg(2+) is required as a cofactor.

It catalyses the reaction (2S)-lactyl-2-diphospho-5'-guanosine + 7,8-didemethyl-8-hydroxy-5-deazariboflavin = oxidized coenzyme F420-0 + GMP + H(+). The protein operates within cofactor biosynthesis; coenzyme F420 biosynthesis. Functionally, catalyzes the transfer of the 2-phospholactate moiety from (2S)-lactyl-2-diphospho-5'-guanosine to 7,8-didemethyl-8-hydroxy-5-deazariboflavin (FO) with the formation of oxidized coenzyme F420-0 and GMP. This is 2-phospho-L-lactate transferase from Methanopyrus kandleri (strain AV19 / DSM 6324 / JCM 9639 / NBRC 100938).